A 327-amino-acid chain; its full sequence is Undecaprenyl-phosphate 4-deoxy-4-formamido-L-arabinose transferase (327 aa).

At 1-235 (MFDAAPIKKV…TCLTTTPLRL (235 aa)) the chain is on the cytoplasmic side. Residues 236–256 (LSLLGSVIAIGGFSLSVLLIV) traverse the membrane as a helical segment. Topologically, residues 257 to 269 (LRLALGPQWAAEG) are periplasmic. Residues 270-290 (VFMLFAVLFTFIGAQFIGMGL) form a helical membrane-spanning segment. The Cytoplasmic segment spans residues 291–327 (LGEYIGRIYNDVRARPRYFVQQVIYPESTSFTEESHQ).

The protein belongs to the glycosyltransferase 2 family.

Its subcellular location is the cell inner membrane. It carries out the reaction UDP-4-deoxy-4-formamido-beta-L-arabinose + di-trans,octa-cis-undecaprenyl phosphate = 4-deoxy-4-formamido-alpha-L-arabinopyranosyl di-trans,octa-cis-undecaprenyl phosphate + UDP. It functions in the pathway glycolipid biosynthesis; 4-amino-4-deoxy-alpha-L-arabinose undecaprenyl phosphate biosynthesis; 4-amino-4-deoxy-alpha-L-arabinose undecaprenyl phosphate from UDP-4-deoxy-4-formamido-beta-L-arabinose and undecaprenyl phosphate: step 1/2. The protein operates within bacterial outer membrane biogenesis; lipopolysaccharide biosynthesis. In terms of biological role, catalyzes the transfer of 4-deoxy-4-formamido-L-arabinose from UDP to undecaprenyl phosphate. The modified arabinose is attached to lipid A and is required for resistance to polymyxin and cationic antimicrobial peptides. The protein is Undecaprenyl-phosphate 4-deoxy-4-formamido-L-arabinose transferase of Salmonella newport (strain SL254).